The chain runs to 107 residues: uncharacterized protein (107 aa).

3 helical membrane passes run 15–35 (TGSY…LGIS), 43–63 (LYRV…WLSY), and 87–107 (YFPS…IFCF).

The protein localises to the membrane. This is an uncharacterized protein from Saccharomyces cerevisiae (strain ATCC 204508 / S288c) (Baker's yeast).